The following is a 72-amino-acid chain: UPF0154 protein EF_1734 (72 aa).

A helical membrane pass occupies residues 4 to 26 (GWVVLIAVIALLVGAAGGFFLAR).

Belongs to the UPF0154 family.

The protein localises to the membrane. This chain is UPF0154 protein EF_1734, found in Enterococcus faecalis (strain ATCC 700802 / V583).